Consider the following 935-residue polypeptide: Lon protease homolog 2, peroxisomal (935 aa).

The Lon N-terminal domain maps to 12 to 296 (LPVHRLERNL…NLRRLVEEMG (285 aa)). An ATP-binding site is contributed by 452 to 459 (GPPGVGKT). In terms of domain architecture, Lon proteolytic spans 692-922 (QKGYGVVNGL…SDVLASVWEG (231 aa)). Catalysis depends on residues Ser789 and Lys832. A Microbody targeting signal motif is present at residues 933–935 (ARI).

It belongs to the peptidase S16 family.

The protein resides in the peroxisome matrix. The enzyme catalyses Hydrolysis of proteins in presence of ATP.. In terms of biological role, ATP-dependent serine protease that mediates the selective degradation of misfolded and unassembled polypeptides in the peroxisomal matrix. Necessary for type 2 peroxisome targeting signal (PTS2)-containing protein processing and facilitates peroxisome matrix protein import. The protein is Lon protease homolog 2, peroxisomal (PLN) of Pichia angusta (Yeast).